The sequence spans 466 residues: GVGFKAGVKDYKLTYYTPEYQTLDTDILAAFRVTPQPGVPPEEAGTAVAAESSTGTWTTVWTDGLTSLDRYKGRCYHIEPVSGEENQFIVYVAYPLDLFEEGSVTNMFTSIVGNVFGFKALRALRLEDLRIPPAYSKTFQGPPHGIQVERDKLNKYGRPLLGCTIKPKLGLSAKNYGRAVYECLRGGLDFTKDDENVNSQPFMRWRDRFLFCAEALYKAQAETGEIKGHYLNATAGTCEEMIKRAVFARELGVPIVMHDYLTGGFTANTSLAHYCRDNGLLLHIHRAMHAVIDRQKNHGIDFRVLAKALRMSGGDHIHSGTVVGKLEGERDITLGFVVLLRDDFIEKDRSRGIYFTQPWVSLPGVLPVASGGIHVWHMPALTEIFGDDSVLQFGGGTLGHPWGNPPGAAANRVALEACVQARNHGQDLAREGNDVIRRASKWSPELSSACEVWKEIKLYFEAMDTL.

Position 5 is an N6,N6,N6-trimethyllysine (Lys5). Residues Asn114 and Thr164 each coordinate substrate. The active-site Proton acceptor is the Lys166. Residue Lys168 participates in substrate binding. Residues Lys192, Asp194, and Glu195 each coordinate Mg(2+). Lys192 bears the N6-carboxylysine mark. His285 serves as the catalytic Proton acceptor. Positions 286, 318, and 370 each coordinate substrate.

It belongs to the RuBisCO large chain family. Type I subfamily. Heterohexadecamer of 8 large chains and 8 small chains; disulfide-linked. The disulfide link is formed within the large subunit homodimers. Requires Mg(2+) as cofactor. Post-translationally, the disulfide bond which can form in the large chain dimeric partners within the hexadecamer appears to be associated with oxidative stress and protein turnover.

It localises to the plastid. Its subcellular location is the chloroplast. The catalysed reaction is 2 (2R)-3-phosphoglycerate + 2 H(+) = D-ribulose 1,5-bisphosphate + CO2 + H2O. It carries out the reaction D-ribulose 1,5-bisphosphate + O2 = 2-phosphoglycolate + (2R)-3-phosphoglycerate + 2 H(+). RuBisCO catalyzes two reactions: the carboxylation of D-ribulose 1,5-bisphosphate, the primary event in carbon dioxide fixation, as well as the oxidative fragmentation of the pentose substrate in the photorespiration process. Both reactions occur simultaneously and in competition at the same active site. This is Ribulose bisphosphate carboxylase large chain from Drosera capensis (Cape sundew).